Here is a 614-residue protein sequence, read N- to C-terminus: Chaperone protein DnaK (614 aa).

The residue at position 176 (Thr-176) is a Phosphothreonine; by autocatalysis. Residues 576-614 (YQQQQSQGGEAGAANGDASKKDDNTVDGDFHEVHDDDKK) form a disordered region. Residues 577 to 589 (QQQQSQGGEAGAA) show a composition bias toward low complexity. The span at 593–614 (ASKKDDNTVDGDFHEVHDDDKK) shows a compositional bias: basic and acidic residues.

Belongs to the heat shock protein 70 family.

Acts as a chaperone. The protein is Chaperone protein DnaK of Fructilactobacillus sanfranciscensis (Lactobacillus sanfranciscensis).